We begin with the raw amino-acid sequence, 483 residues long: Isocitrate dehydrogenase [NADP] (483 aa).

NADP(+) is bound at residue threonine 74. Positions 83, 85, 89, 99, and 121 each coordinate D-threo-isocitrate. Aspartate 232 provides a ligand contact to Mg(2+). NADP(+) contacts are provided by residues 264 to 270 (HGSAPDI) and asparagine 277.

It belongs to the isocitrate and isopropylmalate dehydrogenases family. Homodimer. Mg(2+) is required as a cofactor. Mn(2+) serves as cofactor.

It catalyses the reaction D-threo-isocitrate + NADP(+) = 2-oxoglutarate + CO2 + NADPH. Catalyzes the oxidative decarboxylation of isocitrate to 2-oxoglutarate and carbon dioxide with the concomitant reduction of NADP(+). In Rickettsia typhi (strain ATCC VR-144 / Wilmington), this protein is Isocitrate dehydrogenase [NADP] (icd).